A 667-amino-acid polypeptide reads, in one-letter code: Probable sulfate permease C320.05 (667 aa).

The interval Met-1–Leu-27 is disordered. Residues Phe-16–Arg-25 show a composition bias toward polar residues. 12 consecutive transmembrane segments (helical) span residues Ile-77 to Ser-97, Phe-102 to Cys-122, Ile-162 to Phe-182, Gly-198 to Phe-218, Met-240 to Gly-260, Ile-275 to Phe-295, Tyr-301 to Pro-321, Gly-336 to Leu-356, Leu-368 to Gly-388, Val-405 to Phe-425, Leu-433 to Phe-453, and Gly-465 to Phe-485. An STAS domain is found at Ser-532–Val-657.

The protein belongs to the SLC26A/SulP transporter (TC 2.A.53) family.

It is found in the endoplasmic reticulum membrane. In terms of biological role, possible sulfate transporter. This chain is Probable sulfate permease C320.05, found in Schizosaccharomyces pombe (strain 972 / ATCC 24843) (Fission yeast).